The primary structure comprises 518 residues: MKLRNTGQMAFRSPFSNLHVRRSSHKPSHPAFVRQNRSMHYYFRDALNIGAFGIIFGLPCLLYAFTFFCNDISGCPAPSLLHPSTLSIDKLEQEVGWPEDGIKALYDTQVTMWVLSYYLLSLLMQVFLPGTEVEGTELACGGRLKYKFNAFLSAVLILSGCAVGTYLYGTEFALWTFLWDNYVQVITANLIICTAIAIFVYLRSFSVPAPGQLNPELRQLAPGGHTGNVLYDFFIGRELNPRIKLPIPFVGETARTIDIKVWCEMRPGLLGWIILDLSNIAHQYRTYGYITDSIVLTTAFQAFYVLDALYMEPALLTTMDVIMDGFGFMLSFGDMVWVPFLYNFQTRYLSVYPSELGLSGILIVLAVTAAGYVIFRGANNQKNRFRTDPNDPRVKHLKYIETKTGSKLLISGWWGCARHINYLGDWIMSWSYCLPTGVAGYAIIESINPASGEMQKQAVQTPESRGWGMIFTYFYMIYFGVLLLHRERRDEEKCKRKYGADWNRYTSLVRSRIIPGIY.

N-linked (GlcNAc...) asparagine glycosylation occurs at asparagine 36. Helical transmembrane passes span 110–130 (VTMWVLSYYLLSLLMQVFLPG), 150–170 (AFLSAVLILSGCAVGTYLYGT), 182–202 (YVQVITANLIICTAIAIFVYL), 294–314 (IVLTTAFQAFYVLDALYMEPA), 321–341 (VIMDGFGFMLSFGDMVWVPFL), and 355–375 (ELGLSGILIVLAVTAAGYVIF). NADP(+) contacts are provided by residues lysine 382, arginine 386, leucine 409, tryptophan 414, and 421 to 422 (NY). The helical transmembrane segment at 464–484 (SRGWGMIFTYFYMIYFGVLLL) threads the bilayer. Residues aspartate 490, 494 to 498 (CKRKY), and tyrosine 505 each bind NADP(+).

It belongs to the ERG4/ERG24 family.

Its subcellular location is the endoplasmic reticulum membrane. It functions in the pathway steroid metabolism; ergosterol biosynthesis. Its function is as follows. Delta(14)-sterol reductase; part of the third module of ergosterol biosynthesis pathway that includes the late steps of the pathway. Catalyzes the reduction of the C14=C15 double bond within 4,4,24-trimethyl ergosta-8,14,24(28)-trienolto produce 4,4-dimethylfecosterol. The third module or late pathway involves the ergosterol synthesis itself through consecutive reactions that mainly occur in the endoplasmic reticulum (ER) membrane. Firstly, the squalene synthase erg9 catalyzes the condensation of 2 farnesyl pyrophosphate moieties to form squalene, which is the precursor of all steroids. Squalene synthase is crucial for balancing the incorporation of farnesyl diphosphate (FPP) into sterol and nonsterol isoprene synthesis. Secondly, squalene is converted into lanosterol by the consecutive action of the squalene epoxidase erg1 and the lanosterol synthase erg7. Then, the delta(24)-sterol C-methyltransferase erg6 methylates lanosterol at C-24 to produce eburicol. Eburicol is the substrate of the sterol 14-alpha demethylase encoded by cyp51A and cyp51B, to yield 4,4,24-trimethyl ergosta-8,14,24(28)-trienol. The C-14 reductase erg24 then reduces the C14=C15 double bond which leads to 4,4-dimethylfecosterol. A sequence of further demethylations at C-4, involving the C-4 demethylation complex containing the C-4 methylsterol oxidases erg25A or erg25B, the sterol-4-alpha-carboxylate 3-dehydrogenase erg26 and the 3-keto-steroid reductase erg27, leads to the production of fecosterol via 4-methylfecosterol. The C-8 sterol isomerase erg2 then catalyzes the reaction which results in unsaturation at C-7 in the B ring of sterols and thus converts fecosterol to episterol. The sterol-C5-desaturase erg3B then catalyzes the introduction of a C-5 double bond in the B ring to produce 5-dehydroepisterol. The 2 other sterol-C5-desaturases, erg3A and erg3C, seem to be less important in ergosterol biosynthesis. The C-22 sterol desaturase erg5 further converts 5-dehydroepisterol into ergosta-5,7,22,24(28)-tetraen-3beta-ol by forming the C-22(23) double bond in the sterol side chain. Finally, ergosta-5,7,22,24(28)-tetraen-3beta-ol is substrate of the C-24(28) sterol reductases erg4A and erg4B to produce ergosterol. Possible alternative sterol biosynthetic pathways might exist from fecosterol to ergosterol, depending on the activities of the erg3 isoforms. The chain is Delta(14)-sterol reductase erg24B from Aspergillus fumigatus (strain ATCC MYA-4609 / CBS 101355 / FGSC A1100 / Af293) (Neosartorya fumigata).